A 227-amino-acid polypeptide reads, in one-letter code: PKHD-type hydroxylase GDI1238/Gdia_1949 (227 aa).

Residues 78–178 (RVVPPLFNRY…RLASFFWTQS (101 aa)) enclose the Fe2OG dioxygenase domain. Residues H96, D98, and H159 each contribute to the Fe cation site. A 2-oxoglutarate-binding site is contributed by R169.

Fe(2+) is required as a cofactor. It depends on L-ascorbate as a cofactor.

The protein is PKHD-type hydroxylase GDI1238/Gdia_1949 of Gluconacetobacter diazotrophicus (strain ATCC 49037 / DSM 5601 / CCUG 37298 / CIP 103539 / LMG 7603 / PAl5).